Reading from the N-terminus, the 571-residue chain is Urease subunit alpha (571 aa).

One can recognise a Urease domain in the interval 134–571 (GAIDTHIHFI…LPMAQRYFLF (438 aa)). Residues H139, H141, and K222 each contribute to the Ni(2+) site. An N6-carboxylysine modification is found at K222. H224 contributes to the substrate binding site. Ni(2+) is bound by residues H251 and H277. H325 functions as the Proton donor in the catalytic mechanism. Position 365 (D365) interacts with Ni(2+).

Belongs to the metallo-dependent hydrolases superfamily. Urease alpha subunit family. Heterotrimer of UreA (gamma), UreB (beta) and UreC (alpha) subunits. Three heterotrimers associate to form the active enzyme. Requires Ni cation as cofactor. Carboxylation allows a single lysine to coordinate two nickel ions.

Its subcellular location is the cytoplasm. It catalyses the reaction urea + 2 H2O + H(+) = hydrogencarbonate + 2 NH4(+). It functions in the pathway nitrogen metabolism; urea degradation; CO(2) and NH(3) from urea (urease route): step 1/1. The sequence is that of Urease subunit alpha from Bordetella parapertussis (strain 12822 / ATCC BAA-587 / NCTC 13253).